The following is a 183-amino-acid chain: Large ribosomal subunit protein uL22 (183 aa).

Positions 163-183 (KTAAKKQSAKKLKKQKMMYRE) are disordered. Basic residues predominate over residues 165 to 183 (AAKKQSAKKLKKQKMMYRE).

It belongs to the universal ribosomal protein uL22 family.

In Pectinaria gouldii (Trumpet worm), this protein is Large ribosomal subunit protein uL22 (rpl-17).